The sequence spans 1133 residues: Lon protease homolog, mitochondrial (1133 aa).

The N-terminal 37 residues, 1 to 37, are a transit peptide targeting the mitochondrion; sequence MLRTRTTKTLSTVARTTRAIQYYRSIAKTAAVSQRRF. Residues 38 to 98 constitute a propeptide, removed in mature form; by autocatalysis; the sequence is ASTLTVRDVE…ATNSGKSILA (61 aa). Composition is skewed to basic and acidic residues over residues 98-117 and 125-143; these read AKDD…VPDE and EPTR…EASK. Disordered stretches follow at residues 98-176 and 282-358; these read AKDD…KDVP and ELFP…LDDI. Over residues 145-166 the composition is skewed to low complexity; it reads SRSSASGGGQSSSSRSDSGDGS. The Lon N-terminal domain maps to 182–480; it reads MLALPIARRP…KSLLVLKKEL (299 aa). Composition is skewed to basic and acidic residues over residues 282 to 301 and 325 to 340; these read ELFP…KDTD and KLED…SELQ. Acidic residues predominate over residues 348 to 358; it reads TEEESEELDDI. Residue 632-639 coordinates ATP; sequence GPPGVGKT. The segment at 839–892 is dispensable for catalytic activity; the sequence is KKLSIEDSPTSSADSKPKESVSSEEKAENNAKSSSEKTKDNNSEKTSDDIEALK. The tract at residues 844–889 is disordered; the sequence is EDSPTSSADSKPKESVSSEEKAENNAKSSSEKTKDNNSEKTSDDIE. Residues 853 to 889 show a composition bias toward basic and acidic residues; it reads SKPKESVSSEEKAENNAKSSSEKTKDNNSEKTSDDIE. The Lon proteolytic domain maps to 923–1109; the sequence is TTPPGVVMGL…NDIFQKLFKD (187 aa). Residues Ser-1015 and Lys-1058 contribute to the active site.

Belongs to the peptidase S16 family. As to quaternary structure, homohexamer. Organized in a ring with a central cavity. The ATP-binding and proteolytic domains (AP-domain) form a hexameric chamber. Oligomerization is independent of its proteolytic activity and the autocatalytic maturation of its subunits.

The protein localises to the mitochondrion matrix. It catalyses the reaction Hydrolysis of proteins in presence of ATP.. In terms of biological role, ATP-dependent serine protease that mediates the selective degradation of misfolded, unassembled or oxidatively damaged polypeptides as well as certain short-lived regulatory proteins in the mitochondrial matrix. May also have a chaperone function in the assembly of inner membrane protein complexes. Participates in the regulation of mitochondrial gene expression and in the maintenance of the integrity of the mitochondrial genome. Binds to mitochondrial DNA in a site-specific manner. Endogenous substrates include ABF2, ACO2, ILV1, ILV2, LSC1, LYS4, MGM101 and several oxidized proteins. The 2 nucleic acid-binding proteins ABF2 and MGM101 are protected from degradation by PIM1 when they are bound to DNA. In Saccharomyces cerevisiae (strain ATCC 204508 / S288c) (Baker's yeast), this protein is Lon protease homolog, mitochondrial.